A 530-amino-acid polypeptide reads, in one-letter code: Sensor protein kinase PilS (530 aa).

6 consecutive transmembrane segments (helical) span residues 25 to 37 (LTIG…LISS), 57 to 70 (WCYL…ALFL), 76 to 98 (LLPI…YAGG), 101 to 119 (PSGI…NILL), 124 to 144 (GLVI…FLSL), and 156 to 174 (AGGL…QALV). Residues 175–530 (RRQEQTETLA…ITFAHPRKLS (356 aa)) lie on the Cytoplasmic side of the membrane. One can recognise a PAS domain in the interval 196 to 260 (ELNALILQRM…KQWRLNPSLR (65 aa)). Positions 316-527 (GIAHEIRNPL…CFRITFAHPR (212 aa)) constitute a Histidine kinase domain. His-319 carries the post-translational modification Phosphohistidine; by autocatalysis.

As to quaternary structure, interacts with PilA.

The protein resides in the cell inner membrane. It catalyses the reaction ATP + protein L-histidine = ADP + protein N-phospho-L-histidine.. Functionally, member of the two-component regulatory system PilS/PilR that regulates the expression of multiple genes including the type IV pilus (T4P) major subunit PilA. Thereby, plays a major role in the regulation of multiple motility pathways. Functions as a membrane-associated protein kinase that phosphorylates PilR in response to environmental signals leading to activation of specific gene promoters including the pilin gene. In Pseudomonas aeruginosa (strain ATCC 15692 / DSM 22644 / CIP 104116 / JCM 14847 / LMG 12228 / 1C / PRS 101 / PAO1), this protein is Sensor protein kinase PilS (pilS).